Reading from the N-terminus, the 429-residue chain is Trigger factor (429 aa).

The PPIase FKBP-type domain maps to 161–246 (EDRVTIDFTG…LKKVEERELP (86 aa)).

It belongs to the FKBP-type PPIase family. Tig subfamily. As to quaternary structure, homodimer and monomer. In vivo most of the ribosomes are in complex with monomeric TF. Uncomplexed TF, however, is in a monomer-dimer equilibrium with approximately two thirds of TF existing in a dimeric state.

The protein localises to the cytoplasm. The enzyme catalyses [protein]-peptidylproline (omega=180) = [protein]-peptidylproline (omega=0). Its function is as follows. Involved in protein export. Acts as a chaperone by maintaining the newly synthesized protein in an open conformation. Functions as a peptidyl-prolyl cis-trans isomerase. This is Trigger factor from Escherichia coli O45:K1 (strain S88 / ExPEC).